A 790-amino-acid polypeptide reads, in one-letter code: Probable copper-transporting ATPase SynA (790 aa).

The Cytoplasmic portion of the chain corresponds to 1–105; the sequence is MPAAIVHSAD…IPPLQQQRLQ (105 aa). One can recognise an HMA domain in the interval 14 to 81; sequence TSILVEVEGM…EITGLGFRAQ (68 aa). Residues C25 and C28 each coordinate Cu cation. The chain crosses the membrane as a helical span at residues 106-125; it reads LAIAAFLLIVSSWGHLGHWL. The Extracellular portion of the chain corresponds to 126 to 134; sequence DHPLPGTDQ. The helical transmembrane segment at 135 to 154 threads the bilayer; sequence LWFHALLAIWALLGPGRSIL. The Cytoplasmic segment spans residues 155–166; it reads QAGWQGLRCGAP. Residues 167-189 traverse the membrane as a helical segment; the sequence is NMNSLVLLGTGSAYLASLVALLW. The Extracellular segment spans residues 190–193; sequence PQLG. The chain crosses the membrane as a helical span at residues 194–211; that stretch reads WVCFLDEPVMLLGFILLG. The Cytoplasmic segment spans residues 212–357; that stretch reads RTLEEQARFR…RKAPVQRFAD (146 aa). The chain crosses the membrane as a helical span at residues 358–380; that stretch reads AIAGRFVYGVCAIAALTFGFWAT. Topologically, residues 381-416 are extracellular; sequence LGSRWWPQVLQQPLPGLLIHAPHHGMEMAHPHSHSP. The chain crosses the membrane as a helical span at residues 417–439; sequence LLLALTLAISVLVVACPCALGLA. At 440 to 726 the chain is on the cytoplasmic side; the sequence is TPTAILVATG…QMGLRTIRQN (287 aa). Catalysis depends on D476, which acts as the 4-aspartylphosphate intermediate. Mg(2+) contacts are provided by D669 and D673. Residues 727–749 traverse the membrane as a helical segment; it reads LTWALGYNVVMLPLAAGAFLPAY. At 750–753 the chain is on the extracellular side; it reads GLAL. A helical membrane pass occupies residues 754-776; sequence TPAIAGACMAVSSLAVVSNSLLL. Over 777 to 790 the chain is Cytoplasmic; that stretch reads RYWFRRSLNHSVSV.

The protein belongs to the cation transport ATPase (P-type) (TC 3.A.3) family. Type IB subfamily.

It is found in the cell membrane. It catalyses the reaction Cu(2+)(in) + ATP + H2O = Cu(2+)(out) + ADP + phosphate + H(+). In terms of biological role, involved in copper transport. The polypeptide is Probable copper-transporting ATPase SynA (synA) (Synechococcus sp. (strain ATCC 27144 / PCC 6301 / SAUG 1402/1) (Anacystis nidulans)).